A 210-amino-acid chain; its full sequence is Glutathione S-transferase-like protein FUS3 (210 aa).

The GST N-terminal domain occupies 1–74 (MPNARVFKIL…YVAQSGPQAS (74 aa)). In terms of domain architecture, GST C-terminal spans 80–206 (DAMSSAKIRQ…GKPNFIEKRR (127 aa)).

Belongs to the GST superfamily.

Glutathione S-transferase-like protein; part of the gene cluster that mediates the biosynthesis of the mycotoxin fusarin C. Within the cluster, FUS1, FUS2, FUS8 and FUS9 are sufficient for fusarin production. The other FUS cluster members are not essential for fusarin C biosynthesis. The polypeptide is Glutathione S-transferase-like protein FUS3 (Gibberella fujikuroi (strain CBS 195.34 / IMI 58289 / NRRL A-6831) (Bakanae and foot rot disease fungus)).